The chain runs to 85 residues: Antibacterial factor-related peptide 2 (85 aa).

A signal peptide spans 1 to 17; it reads MFVRSLFLALLLATIVA. Residues 82–85 constitute a propeptide that is removed on maturation; that stretch reads IKRG.

As to expression, expressed in the pharynx (at protein level). Detected in pharyngeal neurons and secretory cells.

It is found in the secreted. Exhibits antimicrobial activity against the Gram-positive bacteria B.subtilis IFO 3134, K.varians MAFF 118076 and S.aureus ATCC 6538P, the Gram-negative bacteria A.tumefaciens MAFF 1001, B.bacteriovorus MAFF 106101 and K.pneumoniae MAFF 519002, and the yeasts C.krusei MAFF 114085, K.thermotolerans MAFF 113848 and T.delbrueckii MAFF 113811. This is Antibacterial factor-related peptide 2 from Caenorhabditis elegans.